A 95-amino-acid polypeptide reads, in one-letter code: Large ribosomal subunit protein uL23 (95 aa).

The protein belongs to the universal ribosomal protein uL23 family. Part of the 50S ribosomal subunit. Contacts protein L29, and trigger factor when it is bound to the ribosome.

Functionally, one of the early assembly proteins it binds 23S rRNA. One of the proteins that surrounds the polypeptide exit tunnel on the outside of the ribosome. Forms the main docking site for trigger factor binding to the ribosome. The sequence is that of Large ribosomal subunit protein uL23 from Desulfotalea psychrophila (strain LSv54 / DSM 12343).